The sequence spans 2195 residues: Genome polyprotein (2195 aa).

Residue Gly2 is the site of N-myristoyl glycine; by host attachment. The Cytoplasmic portion of the chain corresponds to 2–1505 (GAQVSTQKTG…HVSRAFICLQ (1504 aa)). Residues 567–583 (LLQGDVVEAVENAVARV) are amphipathic alpha-helix. Residues His882 and Asp900 each act as for protease 2A activity in the active site. Residues Cys917 and Cys919 each coordinate Zn(2+). Catalysis depends on Cys971, which acts as the For protease 2A activity. Cys977 and His979 together coordinate Zn(2+). The interval 1111–1183 (NNGWLKKFTE…EQSAPSQSDQ (73 aa)) is membrane-binding. Positions 1111–1249 (NNGWLKKFTE…SPGAGKSVAT (139 aa)) are oligomerization. The segment at 1132–1136 (SIKIQ) is RNA-binding. Residues 1215 to 1371 (EKKMSNYIQF…SMYSQNGKIN (157 aa)) enclose the SF3 helicase domain. The Zn(2+) site is built by Cys1379, Cys1391, and Cys1396. The segment at 1379–1396 (CDEECCPVNFKRCCPLVC) adopts a C4-type; degenerate zinc-finger fold. Residues 1423–1430 (EYNHRHSV) are RNA-binding. Residues 1434–1439 (LEALFQ) form an oligomerization region. An intramembrane segment occupies 1506 to 1521 (ALTTFVSVAGIIYIIY). At 1522–2195 (KLFAGFQGAY…TLRRKWLDSF (674 aa)) the chain is on the cytoplasmic side. Tyr1531 carries the O-(5'-phospho-RNA)-tyrosine modification. The Peptidase C3 domain occupies 1551 to 1729 (GPAFEFAVAM…FSAALLKHYF (179 aa)). Residues His1590, Glu1621, and Cys1697 each act as for protease 3C activity in the active site. A RdRp catalytic domain is found at 1960-2076 (GHLIAFDYSG…SYPWPIDASL (117 aa)). Positions 1966 and 2062 each coordinate Mg(2+).

It belongs to the picornaviruses polyprotein family. In terms of assembly, interacts with capsid protein VP1 and capsid protein VP3 to form heterotrimeric protomers. As to quaternary structure, interacts with capsid protein VP0, and capsid protein VP3 to form heterotrimeric protomers. Five protomers subsequently associate to form pentamers which serve as building blocks for the capsid. Interacts with capsid protein VP2, capsid protein VP3 and capsid protein VP4 following cleavage of capsid protein VP0. Interacts with capsid protein VP1 and capsid protein VP3 in the mature capsid. In terms of assembly, interacts with capsid protein VP0 and capsid protein VP1 to form heterotrimeric protomers. Five protomers subsequently associate to form pentamers which serve as building blocks for the capsid. Interacts with capsid protein VP4 in the mature capsid. Interacts with protein 2C; this interaction may be important for virion morphogenesis. As to quaternary structure, interacts with capsid protein VP1 and capsid protein VP3. Homodimer. In terms of assembly, homohexamer; forms a hexameric ring structure with 6-fold symmetry characteristic of AAA+ ATPases. Interacts (via N-terminus) with host RTN3 (via reticulon domain); this interaction is important for viral replication. Interacts with capsid protein VP3; this interaction may be important for virion morphogenesis. As to quaternary structure, interacts with protein 3CD. Homodimer. Interacts with host GBF1. Interacts (via GOLD domain) with host ACBD3 (via GOLD domain); this interaction allows the formation of a viral protein 3A/ACBD3 heterotetramer with a 2:2 stoichiometry, which will stimulate the recruitment of host PI4KB in order to synthesize PI4P at the viral RNA replication sites. In terms of assembly, interacts with RNA-directed RNA polymerase. As to quaternary structure, interacts with protein 3AB and with RNA-directed RNA polymerase. Interacts with Viral protein genome-linked and with protein 3CD. Mg(2+) is required as a cofactor. Post-translationally, specific enzymatic cleavages in vivo by the viral proteases yield processing intermediates and the mature proteins. In terms of processing, myristoylation is required for the formation of pentamers during virus assembly. Further assembly of 12 pentamers and a molecule of genomic RNA generates the provirion. During virion maturation, immature virions are rendered infectious following cleavage of VP0 into VP4 and VP2. This maturation seems to be an autocatalytic event triggered by the presence of RNA in the capsid and it is followed by a conformational change infectious virion. Post-translationally, myristoylation is required during RNA encapsidation and formation of the mature virus particle. In terms of processing, VPg is uridylylated by the polymerase into VPg-pUpU. This acts as a nucleotide-peptide primer for the genomic RNA replication.

It is found in the virion. Its subcellular location is the host cytoplasm. The protein resides in the host cytoplasmic vesicle membrane. The protein localises to the host nucleus. The enzyme catalyses a ribonucleoside 5'-triphosphate + H2O = a ribonucleoside 5'-diphosphate + phosphate + H(+). The catalysed reaction is Selective cleavage of Tyr-|-Gly bond in the picornavirus polyprotein.. It carries out the reaction RNA(n) + a ribonucleoside 5'-triphosphate = RNA(n+1) + diphosphate. It catalyses the reaction Selective cleavage of Gln-|-Gly bond in the poliovirus polyprotein. In other picornavirus reactions Glu may be substituted for Gln, and Ser or Thr for Gly.. Its activity is regulated as follows. Replication or transcription is subject to high level of random mutations by the nucleotide analog ribavirin. Its function is as follows. Forms an icosahedral capsid of pseudo T=3 symmetry with capsid proteins VP2 and VP3. The capsid is 300 Angstroms in diameter, composed of 60 copies of each capsid protein and enclosing the viral positive strand RNA genome. Capsid protein VP1 mainly forms the vertices of the capsid. Capsid protein VP1 interacts with host cell receptor to provide virion attachment to target host cells. This attachment induces virion internalization. Tyrosine kinases are probably involved in the entry process. After binding to its receptor, the capsid undergoes conformational changes. Capsid protein VP1 N-terminus (that contains an amphipathic alpha-helix) and capsid protein VP4 are externalized. Together, they shape a pore in the host membrane through which viral genome is translocated to host cell cytoplasm. Forms an icosahedral capsid of pseudo T=3 symmetry with capsid proteins VP2 and VP3. The capsid is 300 Angstroms in diameter, composed of 60 copies of each capsid protein and enclosing the viral positive strand RNA genome. Functionally, lies on the inner surface of the capsid shell. After binding to the host receptor, the capsid undergoes conformational changes. Capsid protein VP4 is released, Capsid protein VP1 N-terminus is externalized, and together, they shape a pore in the host membrane through which the viral genome is translocated into the host cell cytoplasm. In terms of biological role, component of immature procapsids, which is cleaved into capsid proteins VP4 and VP2 after maturation. Allows the capsid to remain inactive before the maturation step. Its function is as follows. Cysteine protease that cleaves viral polyprotein and specific host proteins. It is responsible for the autocatalytic cleavage between the P1 and P2 regions, which is the first cleavage occurring in the polyprotein. Also cleaves the host translation initiation factor EIF4G1, in order to shut down the capped cellular mRNA translation. Inhibits the host nucleus-cytoplasm protein and RNA trafficking by cleaving host members of the nuclear pores. Counteracts stress granule formation probably by antagonizing its assembly or promoting its dissassembly. Plays an essential role in the virus replication cycle by acting as a viroporin. Creates a pore in the host endoplasmic reticulum and as a consequence releases Ca2+ in the cytoplasm of infected cell. In turn, high levels of cytoplasmic calcium may trigger membrane trafficking and transport of viral ER-associated proteins to viroplasms, sites of viral genome replication. Functionally, induces and associates with structural rearrangements of intracellular membranes. Displays RNA-binding, nucleotide binding and NTPase activities. May play a role in virion morphogenesis and viral RNA encapsidation by interacting with the capsid protein VP3. In terms of biological role, localizes the viral replication complex to the surface of membranous vesicles. Together with protein 3CD binds the Cis-Active RNA Element (CRE) which is involved in RNA synthesis initiation. Acts as a cofactor to stimulate the activity of 3D polymerase, maybe through a nucleid acid chaperone activity. Its function is as follows. Localizes the viral replication complex to the surface of membranous vesicles. It inhibits host cell endoplasmic reticulum-to-Golgi apparatus transport and causes the disassembly of the Golgi complex, possibly through GBF1 interaction. This would result in depletion of MHC, trail receptors and IFN receptors at the host cell surface. Plays an essential role in viral RNA replication by recruiting ACBD3 and PI4KB at the viral replication sites, thereby allowing the formation of the rearranged membranous structures where viral replication takes place. Acts as a primer for viral RNA replication and remains covalently bound to viral genomic RNA. VPg is uridylylated prior to priming replication into VPg-pUpU. The oriI viral genomic sequence may act as a template for this. The VPg-pUpU is then used as primer on the genomic RNA poly(A) by the RNA-dependent RNA polymerase to replicate the viral genome. During genome replication, the VPg-RNA linkage is removed by the host TDP2, thereby accelerating replication. During the late stage of the replication cycle, host TDP2 is excluded from sites of viral RNA synthesis and encapsidation, allowing for the generation of progeny virions. Functionally, involved in the viral replication complex and viral polypeptide maturation. It exhibits protease activity with a specificity and catalytic efficiency that is different from protease 3C. Protein 3CD lacks polymerase activity. The 3C domain in the context of protein 3CD may have an RNA binding activity. Protein 3CD binds to the 5'UTR of the viral genome. In terms of biological role, replicates the viral genomic RNA on the surface of intracellular membranes. May form linear arrays of subunits that propagate along a strong head-to-tail interaction called interface-I. Covalently attaches UMP to a tyrosine of VPg, which is used to prime RNA synthesis. The positive stranded RNA genome is first replicated at virus induced membranous vesicles, creating a dsRNA genomic replication form. This dsRNA is then used as template to synthesize positive stranded RNA genomes. ss(+)RNA genomes are either translated, replicated or encapsidated. Its function is as follows. Major viral protease that mediates proteolytic processing of the polyprotein. Cleaves host EIF5B, contributing to host translation shutoff. Also cleaves host PABPC1, contributing to host translation shutoff. Cleaves host NLRP1, triggers host N-glycine-mediated degradation of the autoinhibitory NLRP1 N-terminal fragment. In Echovirus 11 (strain Gregory), this protein is Genome polyprotein.